The sequence spans 225 residues: 3-dehydroquinate dehydratase (225 aa).

3-dehydroquinate contacts are provided by residues Ser6, 30–32 (EWR), and Arg62. The active-site Proton donor/acceptor is the His118. The active-site Schiff-base intermediate with substrate is Lys143. 3-dehydroquinate-binding residues include Arg186, Ser205, and Gln209.

Belongs to the type-I 3-dehydroquinase family. Homodimer.

The enzyme catalyses 3-dehydroquinate = 3-dehydroshikimate + H2O. Its pathway is metabolic intermediate biosynthesis; chorismate biosynthesis; chorismate from D-erythrose 4-phosphate and phosphoenolpyruvate: step 3/7. Its function is as follows. Involved in the third step of the chorismate pathway, which leads to the biosynthesis of aromatic amino acids. Catalyzes the cis-dehydration of 3-dehydroquinate (DHQ) and introduces the first double bond of the aromatic ring to yield 3-dehydroshikimate. In Streptococcus sanguinis (strain SK36), this protein is 3-dehydroquinate dehydratase.